The primary structure comprises 364 residues: Aminomethyltransferase (364 aa).

This sequence belongs to the GcvT family. The glycine cleavage system is composed of four proteins: P, T, L and H.

It catalyses the reaction N(6)-[(R)-S(8)-aminomethyldihydrolipoyl]-L-lysyl-[protein] + (6S)-5,6,7,8-tetrahydrofolate = N(6)-[(R)-dihydrolipoyl]-L-lysyl-[protein] + (6R)-5,10-methylene-5,6,7,8-tetrahydrofolate + NH4(+). Its function is as follows. The glycine cleavage system catalyzes the degradation of glycine. This chain is Aminomethyltransferase, found in Citrobacter koseri (strain ATCC BAA-895 / CDC 4225-83 / SGSC4696).